The sequence spans 105 residues: Small ribosomal subunit protein uS10 (105 aa).

It belongs to the universal ribosomal protein uS10 family. In terms of assembly, part of the 30S ribosomal subunit.

Functionally, involved in the binding of tRNA to the ribosomes. The polypeptide is Small ribosomal subunit protein uS10 (Phytoplasma australiense).